A 374-amino-acid polypeptide reads, in one-letter code: DNA replication and repair protein RecF (374 aa).

30–37 (GENAQGKT) provides a ligand contact to ATP.

It belongs to the RecF family.

The protein resides in the cytoplasm. Its function is as follows. The RecF protein is involved in DNA metabolism; it is required for DNA replication and normal SOS inducibility. RecF binds preferentially to single-stranded, linear DNA. It also seems to bind ATP. The chain is DNA replication and repair protein RecF from Lactiplantibacillus plantarum (strain ATCC BAA-793 / NCIMB 8826 / WCFS1) (Lactobacillus plantarum).